We begin with the raw amino-acid sequence, 369 residues long: Aspartate beta-hydroxylase domain-containing protein 2 (369 aa).

Residues 1-58 (MVWAPLGPPRTDCLTLLHTPSKDSPKMSLEWLVAWSWSLDGLRDCIATGIQSVRDCDT) are Cytoplasmic-facing. A helical membrane pass occupies residues 59–79 (TAVITVACLLVLFVWYCYHVG). The Lumenal portion of the chain corresponds to 80-369 (REQPRPYVSV…ALDFIFAPGR (290 aa)). Asn211 carries N-linked (GlcNAc...) asparagine glycosylation. Trp228 and Ser272 together coordinate 2-oxoglutarate. Residue His283 coordinates Fe cation. Residue 292-294 (RCH) participates in 2-oxoglutarate binding. His328 contacts Fe cation. Arg341 lines the 2-oxoglutarate pocket.

The protein belongs to the aspartyl/asparaginyl beta-hydroxylase family. Fe cation serves as cofactor.

The protein resides in the membrane. May function as 2-oxoglutarate-dependent dioxygenase. The chain is Aspartate beta-hydroxylase domain-containing protein 2 (ASPHD2) from Homo sapiens (Human).